Here is a 114-residue protein sequence, read N- to C-terminus: Protein U68 (114 aa).

Belongs to the herpesviridae UL96 family.

This Human herpesvirus 6A (strain Uganda-1102) (HHV-6 variant A) protein is Protein U68 (U68).